Consider the following 234-residue polypeptide: MKFDPPLQSATLIKRYKRFLTDIELPDGEIRTIHCANTGAMTGCAEPGNTVWFSTSENKKRKYPNSWELAETANGHWICVNTAQANRLVVEAINAGTITELQGYSSLRTEVKYGSENSRIDILLEDKNKPVCYIEVKSVTLLDNGQGFFPDAVTTRGQKHLRELIEVAQNGQRSVLFFAILHSGIENVSAAHHIDPDYYRLIKQAEQAGVEIICYKATLNQDEIKLNHCMNFNQ.

Belongs to the SfsA family.

This chain is Sugar fermentation stimulation protein homolog, found in Photobacterium profundum (strain SS9).